Reading from the N-terminus, the 848-residue chain is Translation initiation factor IF-2 (848 aa).

A compositionally biased stretch (basic and acidic residues) spans 1 to 10 (MSENNNDKIT). 2 disordered regions span residues 1–79 (MSEN…EKPV) and 121–163 (AERQ…LFSS). Polar residues predominate over residues 17–33 (LKRSGSETNTVKQNFNH). The span at 121–138 (AERQAAEKQAKESEEGLH) shows a compositional bias: basic and acidic residues. Over residues 149–163 (KSSSNTTKPTPLFSS) the composition is skewed to polar residues. Residues 346-513 (TRPPIVTIMG…AILLQAEILD (168 aa)) enclose the tr-type G domain. The interval 355-362 (GHVDHGKT) is G1. A GTP-binding site is contributed by 355 to 362 (GHVDHGKT). Positions 380–384 (GITQH) are G2. Residues 401–404 (DTPG) are G3. GTP contacts are provided by residues 401 to 405 (DTPGH) and 455 to 458 (NKID). The interval 455–458 (NKID) is G4. Positions 491–493 (SAK) are G5.

The protein belongs to the TRAFAC class translation factor GTPase superfamily. Classic translation factor GTPase family. IF-2 subfamily.

It localises to the cytoplasm. Functionally, one of the essential components for the initiation of protein synthesis. Protects formylmethionyl-tRNA from spontaneous hydrolysis and promotes its binding to the 30S ribosomal subunits. Also involved in the hydrolysis of GTP during the formation of the 70S ribosomal complex. The chain is Translation initiation factor IF-2 from Bartonella bacilliformis (strain ATCC 35685 / KC583 / Herrer 020/F12,63).